Consider the following 374-residue polypeptide: F-box/LRR-repeat protein 8 (374 aa).

The region spanning 2–48 is the F-box domain; that stretch reads GELVDNLPEEVLALIFRDLPLRDLAVATRVCRAWAAAAANSTVWSDK.

In terms of assembly, directly interacts with SKP1 and CUL1. As to expression, widely expressed during embryogenesis and in adult tissues.

In terms of biological role, substrate-recognition component of the SCF (SKP1-CUL1-F-box protein)-type E3 ubiquitin ligase complex. This is F-box/LRR-repeat protein 8 (Fbxl8) from Mus musculus (Mouse).